A 467-amino-acid chain; its full sequence is Uronate isomerase (467 aa).

The protein belongs to the metallo-dependent hydrolases superfamily. Uronate isomerase family.

It catalyses the reaction D-glucuronate = D-fructuronate. The enzyme catalyses aldehydo-D-galacturonate = keto-D-tagaturonate. Its pathway is carbohydrate metabolism; pentose and glucuronate interconversion. The protein is Uronate isomerase of Geobacillus thermodenitrificans (strain NG80-2).